Here is a 271-residue protein sequence, read N- to C-terminus: Regulatory protein RecX (271 aa).

Belongs to the RecX family.

The protein resides in the cytoplasm. Functionally, modulates RecA activity. The chain is Regulatory protein RecX from Lactobacillus delbrueckii subsp. bulgaricus (strain ATCC 11842 / DSM 20081 / BCRC 10696 / JCM 1002 / NBRC 13953 / NCIMB 11778 / NCTC 12712 / WDCM 00102 / Lb 14).